The primary structure comprises 358 residues: Alanine racemase (358 aa).

K35 (proton acceptor; specific for D-alanine) is an active-site residue. K35 is subject to N6-(pyridoxal phosphate)lysine. Substrate is bound at residue R130. The Proton acceptor; specific for L-alanine role is filled by Y255. M303 contacts substrate.

The protein belongs to the alanine racemase family. It depends on pyridoxal 5'-phosphate as a cofactor.

The catalysed reaction is L-alanine = D-alanine. The protein operates within amino-acid biosynthesis; D-alanine biosynthesis; D-alanine from L-alanine: step 1/1. Its function is as follows. Catalyzes the interconversion of L-alanine and D-alanine. May also act on other amino acids. This chain is Alanine racemase (alr), found in Shewanella baltica (strain OS185).